A 207-amino-acid polypeptide reads, in one-letter code: RNA chaperone ProQ (207 aa).

A disordered region spans residues 100–156; it reads TLAESKAKVQARRKEQAQKARDEEKSKPKTKKAPQQRRANKPQAQKPAKQPVETRAL. Positions 111 to 126 are enriched in basic and acidic residues; sequence RRKEQAQKARDEEKSK. The span at 127–139 shows a compositional bias: basic residues; sequence PKTKKAPQQRRAN.

Belongs to the ProQ family.

The protein localises to the cytoplasm. In terms of biological role, RNA chaperone with significant RNA binding, RNA strand exchange and RNA duplexing activities. This Vibrio vulnificus (strain CMCP6) protein is RNA chaperone ProQ.